Here is a 198-residue protein sequence, read N- to C-terminus: NAD(P)H dehydrogenase (quinone) (198 aa).

Residues 4-190 (VLVLYYSAYG…EGAKYQGAHV (187 aa)) form the Flavodoxin-like domain. FMN is bound by residues 10-15 (SAYGHI) and 78-80 (TRF). Tyrosine 12 is an NAD(+) binding site. Position 98 (tryptophan 98) interacts with substrate. FMN-binding positions include 113–119 (SSATQHG) and histidine 134.

This sequence belongs to the WrbA family. It depends on FMN as a cofactor.

The catalysed reaction is a quinone + NADH + H(+) = a quinol + NAD(+). The enzyme catalyses a quinone + NADPH + H(+) = a quinol + NADP(+). This chain is NAD(P)H dehydrogenase (quinone), found in Rhizobium johnstonii (strain DSM 114642 / LMG 32736 / 3841) (Rhizobium leguminosarum bv. viciae).